The following is a 285-amino-acid chain: Casein kinase II subunit beta-2 (285 aa).

A disordered region spans residues 226 to 285 (FKDAEDEAELDDDDEEEEEEEEEEEELAAMDEAEGAQQQHAAAAAGTATGGVAAGGEGVH). A compositionally biased stretch (acidic residues) spans 229–259 (AEDEAELDDDDEEEEEEEEEEEELAAMDEAE). Positions 260–272 (GAQQQHAAAAAGT) are enriched in low complexity. Residues 273–285 (ATGGVAAGGEGVH) are compositionally biased toward gly residues.

The protein belongs to the casein kinase 2 subunit beta family. In terms of assembly, tetramer composed of two alpha chains, one beta chain and one beta' chain. Phosphorylated by alpha subunit.

Its function is as follows. Regulatory subunit of casein kinase II/CK2. As part of the kinase complex regulates the basal catalytic activity of the alpha subunit a constitutively active serine/threonine-protein kinase that phosphorylates a large number of substrates containing acidic residues C-terminal to the phosphorylated serine or threonine. This chain is Casein kinase II subunit beta-2 (ckb-2), found in Neurospora crassa (strain ATCC 24698 / 74-OR23-1A / CBS 708.71 / DSM 1257 / FGSC 987).